Here is a 215-residue protein sequence, read N- to C-terminus: MSKIYDWFEERLEIQAIADDISSKYVPPHVNIFYCLGGITFTLFLVQVATGFAMTFYYRPTVAEAFASVNYLMTDVNFGWLIRSIHRWSASMMVLSMILHVCRVYLTGGFKRPRELTWITGVIMAVCTVSFGVTGYSLPWDQVGYWAVKIVTGVPDAIPVVGPAIVELLRGGVGVGQSTLTRFYSLHTFVLPLLTVVFMLAHFLMIRKQGISGPL.

A helical membrane pass occupies residues 32 to 52 (IFYCLGGITFTLFLVQVATGF). Heme c is bound at residue cysteine 35. Residues histidine 86 and histidine 100 each coordinate heme b. Transmembrane regions (helical) follow at residues 90–110 (ASMM…TGGF), 116–136 (LTWI…VTGY), and 186–206 (LHTF…FLMI). Residues histidine 187 and histidine 202 each contribute to the heme b site.

It belongs to the cytochrome b family. PetB subfamily. The 4 large subunits of the cytochrome b6-f complex are cytochrome b6, subunit IV (17 kDa polypeptide, PetD), cytochrome f and the Rieske protein, while the 4 small subunits are PetG, PetL, PetM and PetN. The complex functions as a dimer. Heme b serves as cofactor. It depends on heme c as a cofactor.

It localises to the plastid. The protein localises to the chloroplast thylakoid membrane. Component of the cytochrome b6-f complex, which mediates electron transfer between photosystem II (PSII) and photosystem I (PSI), cyclic electron flow around PSI, and state transitions. The sequence is that of Cytochrome b6 from Tupiella akineta (Green alga).